Reading from the N-terminus, the 104-residue chain is MAAKIRRDDEVIVLTGKDKGKRGKVKNVLSASKVIVEGINLVKKHQKPVPALNQPGGIVEKEAAIQVSNIALFNAATGKADRVGFRFEDGKKVRFFKSNSETIK.

Belongs to the universal ribosomal protein uL24 family. In terms of assembly, part of the 50S ribosomal subunit.

In terms of biological role, one of two assembly initiator proteins, it binds directly to the 5'-end of the 23S rRNA, where it nucleates assembly of the 50S subunit. One of the proteins that surrounds the polypeptide exit tunnel on the outside of the subunit. In Yersinia enterocolitica serotype O:8 / biotype 1B (strain NCTC 13174 / 8081), this protein is Large ribosomal subunit protein uL24.